Reading from the N-terminus, the 310-residue chain is MRIVFAGTPEFAAEHLKALLDSPYEIVAVYTQPDRPAGRGQKLMPSAVKALAVAHDIPVFQPQTLRNADAQAELAALKPDLMVVVAYGLILPQVVLDIPRLGCINSHASLLPRWRGAAPIQRAVEAGDAESGVTVMRMEAGLDTGPMLLKVVTPISAEDTGGTLHDRLAEMGPPAVVQAIAGLADGSLQGEIQDDALATYAHKLNKDEARIDWTHPAVELERLIRAFNPWPVCHSTLDGESVKVLAANLSTGQGAPGEILSASKDGLVVACGDQALSLTRLQLPGGKALSFSDLFNSRREKFAAGKVLGQ.

109 to 112 (SLLP) serves as a coordination point for (6S)-5,6,7,8-tetrahydrofolate.

Belongs to the Fmt family.

It catalyses the reaction L-methionyl-tRNA(fMet) + (6R)-10-formyltetrahydrofolate = N-formyl-L-methionyl-tRNA(fMet) + (6S)-5,6,7,8-tetrahydrofolate + H(+). In terms of biological role, attaches a formyl group to the free amino group of methionyl-tRNA(fMet). The formyl group appears to play a dual role in the initiator identity of N-formylmethionyl-tRNA by promoting its recognition by IF2 and preventing the misappropriation of this tRNA by the elongation apparatus. The sequence is that of Methionyl-tRNA formyltransferase from Pseudomonas putida (strain ATCC 47054 / DSM 6125 / CFBP 8728 / NCIMB 11950 / KT2440).